The sequence spans 88 residues: UPF0223 protein RBAM_014500 (88 aa).

The protein belongs to the UPF0223 family.

The protein is UPF0223 protein RBAM_014500 of Bacillus velezensis (strain DSM 23117 / BGSC 10A6 / LMG 26770 / FZB42) (Bacillus amyloliquefaciens subsp. plantarum).